The chain runs to 579 residues: MFFRVFLHFIRSHSATAVDFLPVMVHRLPVFKRYMGNTPQKKAVFGQCRGLPCVAPLLTTVEEAPRGISARVWGHFPKWLNGSLLRIGPGKFEFGKDKYNHWFDGMALLHQFRMAKGTVTYRSKFLQSDTYKANSAKNRIVISEFGTLALPDPCKNVFERFMSRFELPGKAAAMTDNTNVNYVRYKGDYYLCTETNFMNKVDIETLEKTEKVDWSKFIAVNGATAHPHYDLDGTAYNMGNSFGPYGFSYKVIRVPPEKVDLGETIHGVQVICSIASTEKGKPSYYHSFGMTRNYIIFIEQPLKMNLWKIATSKIRGKAFSDGISWEPQCNTRFHVVEKRTGQLLPGRYYSKPFVTFHQINAFEDQGCVIIDLCCQDNGRTLEVYQLQNLRKAGEGLDQVHNSAAKSFPRRFVLPLNVSLNAPEGDNLSPLSYTSASAVKQADGTIWCSHENLHQEDLEKEGGIEFPQIYYDRFSGKKYHFFYGCGFRHLVGDSLIKVDVVNKTLKVWREDGFYPSEPVFVPAPGTNEEDGGVILSVVITPNQNESNFILVLDAKNFEELGRAEVPVQMPYGFHGTFIPI.

His-226, His-286, His-357, and His-573 together coordinate Fe cation.

Belongs to the carotenoid oxygenase family. Requires Fe(2+) as cofactor. Highly expressed in retinal pigment epithelium. Also expressed in stomach, small intestine, liver, testis, kidney, adrenal gland, pancreas, heart, skeletal muscle and prostate (at protein level).

It is found in the mitochondrion. The enzyme catalyses all-trans-beta-carotene + O2 = beta-ionone + all-trans-10'-apo-beta-carotenal. It catalyses the reaction 5-cis-lycopene + O2 = 5-cis-10'-apo-lycopenal + (3E,5E)-6,10-dimethylundeca-3,5,9-trien-2-one. The catalysed reaction is 13-cis-lycopene + O2 = 13-cis-10'-apo-lycopenal + (3E,5E)-6,10-dimethylundeca-3,5,9-trien-2-one. It carries out the reaction lutein + O2 = (3R,6R)-hydroxy-alpha-ionone + (3R)-3-hydroxy-10'-apo-beta-carotenal. The enzyme catalyses lutein + O2 = (3R,6R)-3-hydroxy-10'-apo-alpha-carotenal + (3R)-hydroxy-beta-ionone. It catalyses the reaction all-trans-zeaxanthin + 2 O2 = 4,9-dimethyldodeca-2,4,6,8,10-pentaenedial + 2 (3R)-hydroxy-beta-ionone. The catalysed reaction is all-trans-zeaxanthin + O2 = (3R)-3-hydroxy-10'-apo-beta-carotenal + (3R)-hydroxy-beta-ionone. It carries out the reaction beta-cryptoxanthin + O2 = all-trans-10'-apo-beta-carotenal + (3R)-hydroxy-beta-ionone. The enzyme catalyses all-trans-10'-apo-beta-carotenal + O2 = beta-ionone + 4,9-dimethyldodeca-2,4,6,8,10-pentaenedial. It catalyses the reaction (3R)-3-hydroxy-10'-apo-beta-carotenal + O2 = 4,9-dimethyldodeca-2,4,6,8,10-pentaenedial + (3R)-hydroxy-beta-ionone. The catalysed reaction is (3R,6R)-3-hydroxy-10'-apo-alpha-carotenal + O2 = (3R,6R)-hydroxy-alpha-ionone + 4,9-dimethyldodeca-2,4,6,8,10-pentaenedial. Broad specificity mitochondrial dioxygenase that mediates the asymmetric oxidative cleavage of carotenoids. Cleaves carotenes (pure hydrocarbon carotenoids) such as all-trans-beta-carotene and lycopene as well as xanthophylls (oxygenated carotenoids) such as zeaxanthin, lutein and beta-cryptoxanthin at both the 9,10 and the 9',10' carbon-carbon double bond. Through its function in carotenoids metabolism regulates oxidative stress and the production of important signaling molecules. In Homo sapiens (Human), this protein is Carotenoid-cleaving dioxygenase, mitochondrial.